The following is a 233-amino-acid chain: Hydroxyacylglutathione hydrolase (233 aa).

7 residues coordinate Zn(2+): histidine 52, histidine 54, aspartate 56, histidine 57, histidine 108, aspartate 125, and histidine 163.

It belongs to the metallo-beta-lactamase superfamily. Glyoxalase II family. Monomer. It depends on Zn(2+) as a cofactor.

It catalyses the reaction an S-(2-hydroxyacyl)glutathione + H2O = a 2-hydroxy carboxylate + glutathione + H(+). The protein operates within secondary metabolite metabolism; methylglyoxal degradation; (R)-lactate from methylglyoxal: step 2/2. Its function is as follows. Thiolesterase that catalyzes the hydrolysis of S-D-lactoyl-glutathione to form glutathione and D-lactic acid. The chain is Hydroxyacylglutathione hydrolase from Actinobacillus succinogenes (strain ATCC 55618 / DSM 22257 / CCUG 43843 / 130Z).